Reading from the N-terminus, the 122-residue chain is Large ribosomal subunit protein uL14 (122 aa).

The protein belongs to the universal ribosomal protein uL14 family. Part of the 50S ribosomal subunit. Forms a cluster with proteins L3 and L19. In the 70S ribosome, L14 and L19 interact and together make contacts with the 16S rRNA in bridges B5 and B8.

In terms of biological role, binds to 23S rRNA. Forms part of two intersubunit bridges in the 70S ribosome. The sequence is that of Large ribosomal subunit protein uL14 from Pseudothermotoga lettingae (strain ATCC BAA-301 / DSM 14385 / NBRC 107922 / TMO) (Thermotoga lettingae).